The sequence spans 449 residues: 23S rRNA (uracil(1939)-C(5))-methyltransferase RlmD (449 aa).

Residues 12 to 70 (SKQLSAKQSFSVHQLDHLGAGIAQHQGKVVFIPGALPSETVQAQLTEQKKNYARAKLIK) form the TRAM domain. Residues cysteine 83, cysteine 89, cysteine 92, and cysteine 170 each coordinate [4Fe-4S] cluster. S-adenosyl-L-methionine is bound by residues glutamine 282, phenylalanine 311, asparagine 316, glutamate 332, aspartate 359, and aspartate 379. Cysteine 405 (nucleophile) is an active-site residue.

It belongs to the class I-like SAM-binding methyltransferase superfamily. RNA M5U methyltransferase family. RlmD subfamily.

It catalyses the reaction uridine(1939) in 23S rRNA + S-adenosyl-L-methionine = 5-methyluridine(1939) in 23S rRNA + S-adenosyl-L-homocysteine + H(+). Functionally, catalyzes the formation of 5-methyl-uridine at position 1939 (m5U1939) in 23S rRNA. The protein is 23S rRNA (uracil(1939)-C(5))-methyltransferase RlmD of Shewanella sp. (strain MR-7).